Here is a 147-residue protein sequence, read N- to C-terminus: Sentan (147 aa).

The disordered stretch occupies residues M1–R32. Basic and acidic residues predominate over residues T8–G17.

The protein belongs to the S-100 family.

The protein resides in the cell projection. It localises to the cilium. In terms of biological role, may be a component of the linker structure that bridges the ciliary membrane and peripheral singlet microtubules. The sequence is that of Sentan (SNTN) from Homo sapiens (Human).